The following is a 159-amino-acid chain: Succinate dehydrogenase [ubiquinone] cytochrome b small subunit, mitochondrial (159 aa).

The transit peptide at 1-56 (MAVLLKLGVLCSGQGARALSLRSRAVRPAFVSAFLQDQPTPGWRGTQHIHLSPSHQ) directs the protein to the mitochondrion. At 57-63 (SGSKAAS) the chain is on the mitochondrial matrix side. A helical membrane pass occupies residues 64-85 (LHWTSERVVSVLLLGLIPAGYL). Residues 86–90 (NPCSV) are Mitochondrial intermembrane-facing. A helical membrane pass occupies residues 91-111 (VDYSLAAALTLHSHWGIGQVV). Position 102 (His102) interacts with heme b. Residues 112 to 120 (TDYVHGDAL) are Mitochondrial matrix-facing. Tyr114 serves as a coordination point for a ubiquinone. Residues 121–142 (QKATKAGLLAVSALTFAGLCYF) form a helical membrane-spanning segment. Residues 143–159 (NYHDVGICRAVAMLWKL) lie on the Mitochondrial intermembrane side of the membrane.

This sequence belongs to the CybS family. In terms of assembly, component of complex II composed of four subunits: the flavoprotein (FP) SDHA, iron-sulfur protein (IP) SDHB, and a cytochrome b560 composed of SDHC and SDHD.

It localises to the mitochondrion inner membrane. It participates in carbohydrate metabolism; tricarboxylic acid cycle. Its function is as follows. Membrane-anchoring subunit of succinate dehydrogenase (SDH) that is involved in complex II of the mitochondrial electron transport chain and is responsible for transferring electrons from succinate to ubiquinone (coenzyme Q). SDH also oxidizes malate to the non-canonical enol form of oxaloacetate, enol-oxaloacetate. Enol-oxaloacetate, which is a potent inhibitor of the succinate dehydrogenase activity, is further isomerized into keto-oxaloacetate. This is Succinate dehydrogenase [ubiquinone] cytochrome b small subunit, mitochondrial (Sdhd) from Rattus norvegicus (Rat).